Consider the following 480-residue polypeptide: MNAVAKTVPHTDYKIADISLADWGRKELDIAEHEMPGLMSIRRKHAQTKPLKDVRITGSLHMTIQTAVLIETLKDIGANVRWASCNIFSTQDHAAAAIAATGTPVFAWKGETLEEYWDCTLDALTFTLPDGTLTGPELVVDDGGDVTLLIHKGYELENGSTWVDEPASSHEEGVIKALLKRVAVERPGYWARVVKDWKGVSEETTTGVHRLYQIAEAGKLLIPAINVNDSVTKSKFDNLYGCRESLADGLKRAMDVMLAGKVAVVCGYGDVGKGSAASLRAYGARVIVTEIDPICALQASMEGFEVNTIESTLGRGDIYVTTTGNKDIITVEHLQAMKDQAIVCNIGHFDNEIQVDALNALKGVEKINIKPQVDKYVFGNGNAIFLLADGRLVNLGCATGHPSFVMSNSFANQTLAQIDLWEKRDSYEKKVYILPKHLDEEVARLHLEKIGVKLTTLTKDQADYLGVDVAGPYKPDHYRY.

Residues Thr63, Asp142, and Glu203 each contribute to the substrate site. Position 204–206 (204–206 (TTT)) interacts with NAD(+). Lys233 and Asp237 together coordinate substrate. NAD(+) contacts are provided by residues Asn238, 267-272 (GYGDVG), Glu290, Asn325, 346-348 (IGH), and Asn394.

The protein belongs to the adenosylhomocysteinase family. NAD(+) is required as a cofactor.

It is found in the cytoplasm. It carries out the reaction S-adenosyl-L-homocysteine + H2O = L-homocysteine + adenosine. It functions in the pathway amino-acid biosynthesis; L-homocysteine biosynthesis; L-homocysteine from S-adenosyl-L-homocysteine: step 1/1. May play a key role in the regulation of the intracellular concentration of adenosylhomocysteine. The polypeptide is Adenosylhomocysteinase (Xanthomonas campestris pv. campestris (strain 8004)).